The chain runs to 261 residues: Class II histocompatibility antigen, M beta 1 chain (261 aa).

The first 18 residues, 1–18 (MAALWLLLLVLSLHCMGA), serve as a signal peptide directing secretion. Positions 19–112 (GGFVAHVEST…PFWNALTHRT (94 aa)) are beta-1. The Lumenal portion of the chain corresponds to 19-218 (GGFVAHVEST…PGLSPIQTVK (200 aa)). Cystine bridges form between Cys-29/Cys-97, Cys-43/Cys-53, and Cys-135/Cys-192. Asn-75 carries N-linked (GlcNAc...) asparagine glycosylation. The segment at 113-207 (RPPSVRVAQT…GTSEPIRGDW (95 aa)) is beta-2. Positions 114-204 (PPSVRVAQTT…QHSGTSEPIR (91 aa)) constitute an Ig-like C1-type domain. The segment at 208–218 (TPGLSPIQTVK) is connecting peptide. A helical membrane pass occupies residues 219–239 (VSVSAATLGLGFIIFCVGFFR). Over 240-261 (WRKSHSSSYTPLSGSTYPEGRH) the chain is Cytoplasmic. Residues 248-251 (YTPL) carry the YXXZ motif motif.

The protein belongs to the MHC class II family. In terms of assembly, heterodimer of an alpha chain (DMA) and a beta chain (DMB). Interacts with MHCII; this interaction mediates rapid selection of high-affinity peptides.

The protein resides in the late endosome membrane. Its subcellular location is the lysosome membrane. Functionally, plays a critical role in catalyzing the release of class II-associated invariant chain peptide (CLIP) from newly synthesized MHC class II molecules and freeing the peptide binding site for acquisition of antigenic peptides. The sequence is that of Class II histocompatibility antigen, M beta 1 chain (H2-DMb1) from Mus musculus (Mouse).